The following is a 355-amino-acid chain: Countin-like protein (355 aa).

An N-terminal signal peptide occupies residues 1-27 (MNKSLFSLILLIITIFNLASNINIVSA). The tract at residues 63-83 (NNHEDNNNNNNNNNNNNNAYN) is disordered. Over residues 69 to 83 (NNNNNNNNNNNNAYN) the composition is skewed to low complexity. A Saposin B-type domain is found at 93–177 (GDIECVVCLD…ELITACSTPK (85 aa)). 3 cysteine pairs are disulfide-bonded: C97–C173, C100–C167, and C128–C140. N-linked (GlcNAc...) asparagine glycans are attached at residues N132, N209, N242, N253, N254, N282, and N303. The disordered stretch occupies residues 290–355 (ISNPTPTPTP…SSHYKNKINK (66 aa)). Low complexity predominate over residues 301-342 (PSNSTTPTPTPTNSTPTPTSTSTPTSTPTSTPTPTPTSSSST). The segment covering 345–355 (HSSHYKNKINK) has biased composition (basic residues).

Belongs to the countin family.

It localises to the secreted. This is Countin-like protein from Dictyostelium discoideum (Social amoeba).